Here is a 327-residue protein sequence, read N- to C-terminus: Urease accessory protein 4 (327 aa).

The N-linked (GlcNAc...) asparagine glycan is linked to Asn120. The helical transmembrane segment at Val239–Tyr259 threads the bilayer.

The protein belongs to the UreD family. As to quaternary structure, URE4, URE6 and URE7 may form a complex that acts as a GTP-hydrolysis-dependent molecular chaperone, activating the urease apoprotein URE1.

Its subcellular location is the membrane. In terms of biological role, urease accessory protein required for the maturation and activation of urease via the functional incorporation of the urease nickel metallocenter. Plays a role in host brain invasion. In Cryptococcus neoformans var. grubii serotype A (strain H99 / ATCC 208821 / CBS 10515 / FGSC 9487) (Filobasidiella neoformans var. grubii), this protein is Urease accessory protein 4.